The primary structure comprises 284 residues: tRNA-cytidine(32) 2-sulfurtransferase (284 aa).

The PP-loop motif motif lies at 45-50 (SGGKDS). The [4Fe-4S] cluster site is built by C120, C123, and C211.

It belongs to the TtcA family. Homodimer. Mg(2+) is required as a cofactor. It depends on [4Fe-4S] cluster as a cofactor.

It is found in the cytoplasm. It carries out the reaction cytidine(32) in tRNA + S-sulfanyl-L-cysteinyl-[cysteine desulfurase] + AH2 + ATP = 2-thiocytidine(32) in tRNA + L-cysteinyl-[cysteine desulfurase] + A + AMP + diphosphate + H(+). The protein operates within tRNA modification. In terms of biological role, catalyzes the ATP-dependent 2-thiolation of cytidine in position 32 of tRNA, to form 2-thiocytidine (s(2)C32). The sulfur atoms are provided by the cysteine/cysteine desulfurase (IscS) system. This is tRNA-cytidine(32) 2-sulfurtransferase from Alcanivorax borkumensis (strain ATCC 700651 / DSM 11573 / NCIMB 13689 / SK2).